The primary structure comprises 176 residues: Transmembrane protein 238 (176 aa).

Positions 1–22 (MAAAPAVCASQGSPPGAPSAPA) are disordered. At 1–36 (MAAAPAVCASQGSPPGAPSAPAAAPAPAAGLGRCRM) the chain is on the cytoplasmic side. The span at 9–22 (ASQGSPPGAPSAPA) shows a compositional bias: low complexity. A helical membrane pass occupies residues 37-57 (ALLLAVALDVAGMAALLTGVF). Over 58 to 69 (AQLQVRGRDFGD) the chain is Extracellular. Residues 70 to 90 (LLIYSGALLVFLSLLGWILWY) traverse the membrane as a helical segment. The Cytoplasmic segment spans residues 91–176 (TGNIEISRQE…GPGAAGAGSE (86 aa)). The span at 124–137 (SAPAAAGQRPAPGS) shows a compositional bias: low complexity. Residues 124-157 (SAPAAAGQRPAPGSRRARRAARAPPPPAAGSRRV) are disordered. S175 is subject to Phosphoserine.

It is found in the membrane. The protein is Transmembrane protein 238 (TMEM238) of Homo sapiens (Human).